Here is a 159-residue protein sequence, read N- to C-terminus: Major allergen Mal d 1 (159 aa).

The protein belongs to the BetVI family.

The chain is Major allergen Mal d 1 from Malus domestica (Apple).